The primary structure comprises 565 residues: Dihydroxy-acid dehydratase (565 aa).

Cys53 is a binding site for [2Fe-2S] cluster. Asp85 is a binding site for Mg(2+). Cys126 serves as a coordination point for [2Fe-2S] cluster. The Mg(2+) site is built by Asp127 and Lys128. The residue at position 128 (Lys128) is an N6-carboxylysine. Cys198 contacts [2Fe-2S] cluster. Glu450 provides a ligand contact to Mg(2+). Residue Ser476 is the Proton acceptor of the active site.

Belongs to the IlvD/Edd family. Homodimer. [2Fe-2S] cluster is required as a cofactor. Requires Mg(2+) as cofactor.

The catalysed reaction is (2R)-2,3-dihydroxy-3-methylbutanoate = 3-methyl-2-oxobutanoate + H2O. The enzyme catalyses (2R,3R)-2,3-dihydroxy-3-methylpentanoate = (S)-3-methyl-2-oxopentanoate + H2O. It functions in the pathway amino-acid biosynthesis; L-isoleucine biosynthesis; L-isoleucine from 2-oxobutanoate: step 3/4. Its pathway is amino-acid biosynthesis; L-valine biosynthesis; L-valine from pyruvate: step 3/4. Functions in the biosynthesis of branched-chain amino acids. Catalyzes the dehydration of (2R,3R)-2,3-dihydroxy-3-methylpentanoate (2,3-dihydroxy-3-methylvalerate) into 2-oxo-3-methylpentanoate (2-oxo-3-methylvalerate) and of (2R)-2,3-dihydroxy-3-methylbutanoate (2,3-dihydroxyisovalerate) into 2-oxo-3-methylbutanoate (2-oxoisovalerate), the penultimate precursor to L-isoleucine and L-valine, respectively. The sequence is that of Dihydroxy-acid dehydratase from Synechococcus sp. (strain JA-3-3Ab) (Cyanobacteria bacterium Yellowstone A-Prime).